The sequence spans 302 residues: HPr kinase/phosphorylase (302 aa).

Residues His136 and Lys157 contribute to the active site. Gly151–Ser158 contributes to the ATP binding site. Position 158 (Ser158) interacts with Mg(2+). The Proton acceptor; for phosphorylation activity. Proton donor; for dephosphorylation activity role is filled by Asp175. Residues Leu198–Asp207 are important for the catalytic mechanism of both phosphorylation and dephosphorylation. A Mg(2+)-binding site is contributed by Glu199. Arg240 is an active-site residue. Residues Pro261 to Arg266 form an important for the catalytic mechanism of dephosphorylation region.

It belongs to the HPrK/P family. As to quaternary structure, homohexamer. Mg(2+) serves as cofactor.

It catalyses the reaction [HPr protein]-L-serine + ATP = [HPr protein]-O-phospho-L-serine + ADP + H(+). The enzyme catalyses [HPr protein]-O-phospho-L-serine + phosphate + H(+) = [HPr protein]-L-serine + diphosphate. In terms of biological role, catalyzes the ATP- as well as the pyrophosphate-dependent phosphorylation of a specific serine residue in HPr, a phosphocarrier protein of the phosphoenolpyruvate-dependent sugar phosphotransferase system (PTS). HprK/P also catalyzes the pyrophosphate-producing, inorganic phosphate-dependent dephosphorylation (phosphorolysis) of seryl-phosphorylated HPr (P-Ser-HPr). The two antagonistic activities of HprK/P are regulated by several intracellular metabolites, which change their concentration in response to the absence or presence of rapidly metabolisable carbon sources (glucose, fructose, etc.) in the growth medium. Therefore, by controlling the phosphorylation state of HPr, HPrK/P is a sensor enzyme that plays a major role in the regulation of carbon metabolism and sugar transport: it mediates carbon catabolite repression (CCR), and regulates PTS-catalyzed carbohydrate uptake and inducer exclusion. In Clostridium beijerinckii (strain ATCC 51743 / NCIMB 8052) (Clostridium acetobutylicum), this protein is HPr kinase/phosphorylase.